A 483-amino-acid chain; its full sequence is MTKMDIRGAVDAAVPTNIIAAKAAEVRANKVNWQSYLQGQMISSEDCEFIQRFEMKRSPEEKQEMLQTEGSQCAKTFINLMTHISKEQTVQYILTMVDDTLQENHQRVSIFFDYAKRSKNTAWSYFLPMLNRQDLFTVHMAARIIAKLAAWGKELMEGSDLNYYFNWIKTQLASQKLRGSGVAVETGTVSSSDSSQYVQCVAGCLQLMLRVNEYRFAWVEADGVNCIMGVLSNKCGFQLQYQMIFSIWLLAFSPQMCEHLRRYNIIPVLSDILQESVKEKVTRIILAAFRNFLEKSTERETRQEYALALIQCKVLKQLENLEQQKYDDEDISEDIKFLLEKLGESVQDLSSFDEYSSELKSGRLEWSPVHKSEKFWRENAVRLNEKNYELLKILTKLLEVSDDPQVLAVAAHDVGEYVRHYPRGKRVIEQLGGKQLVMNHMHHEDQQVRYNALLAVQKLMVHNWEYLGKQLQSEQPQTAAARS.

Residue serine 483 is modified to Phosphoserine.

It belongs to the V-ATPase H subunit family. In terms of assembly, V-ATPase is a heteromultimeric enzyme made up of two complexes: the ATP-hydrolytic V1 complex and the proton translocation V0 complex. The V1 complex consists of three catalytic AB heterodimers that form a heterohexamer, three peripheral stalks each consisting of EG heterodimers, one central rotor including subunits D and F, and the regulatory subunits C and H. The proton translocation complex V0 consists of the proton transport subunit a, a ring of proteolipid subunits c9c'', rotary subunit d, subunits e and f, and the accessory subunits ATP6AP1/Ac45 and ATP6AP2/PRR. Interacts with AP2M1.

It is found in the cytoplasmic vesicle. The protein resides in the clathrin-coated vesicle membrane. Functionally, subunit of the V1 complex of vacuolar(H+)-ATPase (V-ATPase), a multisubunit enzyme composed of a peripheral complex (V1) that hydrolyzes ATP and a membrane integral complex (V0) that translocates protons. V-ATPase is responsible for acidifying and maintaining the pH of intracellular compartments and in some cell types, is targeted to the plasma membrane, where it is responsible for acidifying the extracellular environment. Subunit H is essential for V-ATPase activity, but not for the assembly of the complex. Involved in the endocytosis mediated by clathrin-coated pits, required for the formation of endosomes. The polypeptide is V-type proton ATPase subunit H (ATP6V1H) (Sus scrofa (Pig)).